Reading from the N-terminus, the 2488-residue chain is Neuron navigator 2 (2488 aa).

Residues 85-192 form the Calponin-homology (CH) domain; it reads GFDTQIYTDW…LFFSLSRYKQ (108 aa). Composition is skewed to low complexity over residues 194–204, 221–247, and 255–267; these read QQQPQKQHLSS, QAGT…PHQQ, and QSSA…SQSK. Disordered stretches follow at residues 194–675 and 706–727; these read QQQP…GSNT and TEGN…SHFT. The segment covering 299-315 has biased composition (polar residues); it reads GGSTTANNRRSQSFNNY. Over residues 356–369 the composition is skewed to low complexity; it reads SGSSSTPTNCSTSS. Residues 384 to 396 show a composition bias toward polar residues; that stretch reads KSLSVKHSATVSM. Pro residues predominate over residues 401-410; sequence PPGPEAPRPT. Residues 492–506 are compositionally biased toward polar residues; the sequence is RTFSRALTNKKSSLK. Residues 498–531 adopt a coiled-coil conformation; sequence LTNKKSSLKGNEKEKEKQQREKDKEKSKDLAKRA. Residues 507–547 show a composition bias toward basic and acidic residues; it reads GNEKEKEKQQREKDKEKSKDLAKRASVTERLDLKEEPKEDP. Over residues 592–606 the composition is skewed to low complexity; it reads MKSMPGKSPSAPAPS. Residues 615–626 are compositionally biased toward polar residues; that stretch reads GKLSSGLPQQKP. 2 stretches are compositionally biased toward low complexity: residues 633 to 642 and 657 to 675; these read SSSSSSLASS and SSQT…GSNT. Residues 706–719 are compositionally biased toward polar residues; it reads TEGNVTAESSSTGV. A coiled-coil region spans residues 743–771; it reads EARRLRTVKNIADLRQNLEETMSSLRGTQ. Disordered stretches follow at residues 804-824, 939-1151, 1177-1200, 1213-1283, 1295-1338, 1355-1412, 1440-1460, 1473-1560, and 1591-1629; these read LSWR…PSMG, LGLG…QSGS, KSSA…NQDD, YRSL…SDNE, PAAQ…PIAT, MTQQ…TNAS, SLSS…ASSK, VKTT…VTSP, and SLSN…SFRD. Residues 939 to 985 are compositionally biased toward low complexity; it reads LGLGDADSWDDSSSVSSGISDTIDNLSTDDINTSSSISSYANTPASS. Residues 1091-1102 are compositionally biased toward basic and acidic residues; the sequence is KTDDAKVSEKGR. A compositionally biased stretch (polar residues) spans 1130–1142; it reads PSSSRTPTANANS. The segment covering 1220–1245 has biased composition (low complexity); that stretch reads SKSNSRNGAGNRSSTSSIDSNISSKS. Positions 1299 to 1309 are enriched in polar residues; the sequence is PVSSPAQTSLQ. Composition is skewed to low complexity over residues 1363 to 1380 and 1388 to 1404; these read SPSG…PLYS and SPLA…PSNS. The segment covering 1440–1456 has biased composition (polar residues); the sequence is SLSSGGVPSHNSSTGLI. Low complexity predominate over residues 1477-1489; the sequence is LSESPLSSPAASP. Phosphoserine occurs at positions 1480, 1484, and 1488. Basic and acidic residues-rich tracts occupy residues 1498 to 1510 and 1526 to 1535; these read RKQD…DRNT and TQEDAKEWLR. The segment covering 1549–1560 has biased composition (low complexity); it reads SPFSSGSSVTSP. Residues 1686–1773 adopt a coiled-coil conformation; the sequence is EEKCQSEIRK…AAAQAAINGV (88 aa). 2 disordered regions span residues 1790 to 1887 and 1951 to 1985; these read ADLR…LRNS and AEND…MGLS. 3 stretches are compositionally biased toward polar residues: residues 1800–1820, 1875–1887, and 1959–1985; these read SDSV…SNIE, NGST…LRNS, and ESQG…MGLS. The stretch at 1897 to 1964 forms a coiled coil; the sequence is MDSEAETVMQ…RLKSESQGSG (68 aa). S1977 is modified (phosphoserine). 2157–2164 is an ATP binding site; that stretch reads GPSGTGKT. Residues 2423 to 2488 form a disordered region; it reads DGYSMPREGS…ILDSSLESTL (66 aa). A compositionally biased stretch (low complexity) spans 2460–2473; sequence YSSPQSYDSDSNSN.

The protein belongs to the Nav/unc-53 family. Highly expressed in the brain, kidney and liver. Also expressed in the thyroid, mammary gland, spinal cord, heart, placenta and lung. Abundantly expressed in colon cancers.

It is found in the nucleus. It catalyses the reaction ATP + H2O = ADP + phosphate + H(+). Functionally, possesses 3' to 5' helicase activity and exonuclease activity. Involved in neuronal development, specifically in the development of different sensory organs. In Homo sapiens (Human), this protein is Neuron navigator 2 (NAV2).